The chain runs to 426 residues: Serine--tRNA ligase (426 aa).

Residues 44–67 are disordered; that stretch reads TEKQALQSERNATSKQIGMLKKKG. Over residues 47–59 the composition is skewed to polar residues; sequence QALQSERNATSKQ. 231-233 contributes to the L-serine binding site; it reads TAE. Residues 262–264 and Val-278 each bind ATP; that span reads RRE. Glu-285 is an L-serine binding site. ATP is bound at residue 349-352; that stretch reads EVSS. Ser-384 lines the L-serine pocket.

The protein belongs to the class-II aminoacyl-tRNA synthetase family. Type-1 seryl-tRNA synthetase subfamily. Homodimer. The tRNA molecule binds across the dimer.

It is found in the cytoplasm. The catalysed reaction is tRNA(Ser) + L-serine + ATP = L-seryl-tRNA(Ser) + AMP + diphosphate + H(+). The enzyme catalyses tRNA(Sec) + L-serine + ATP = L-seryl-tRNA(Sec) + AMP + diphosphate + H(+). The protein operates within aminoacyl-tRNA biosynthesis; selenocysteinyl-tRNA(Sec) biosynthesis; L-seryl-tRNA(Sec) from L-serine and tRNA(Sec): step 1/1. Catalyzes the attachment of serine to tRNA(Ser). Is also able to aminoacylate tRNA(Sec) with serine, to form the misacylated tRNA L-seryl-tRNA(Sec), which will be further converted into selenocysteinyl-tRNA(Sec). The protein is Serine--tRNA ligase of Akkermansia muciniphila (strain ATCC BAA-835 / DSM 22959 / JCM 33894 / BCRC 81048 / CCUG 64013 / CIP 107961 / Muc).